The sequence spans 849 residues: DNA mismatch repair protein MutS (849 aa).

Residue 602–609 (GPNMSGKS) participates in ATP binding.

This sequence belongs to the DNA mismatch repair MutS family.

In terms of biological role, this protein is involved in the repair of mismatches in DNA. It is possible that it carries out the mismatch recognition step. This protein has a weak ATPase activity. The chain is DNA mismatch repair protein MutS from Streptococcus mutans serotype c (strain ATCC 700610 / UA159).